The primary structure comprises 654 residues: Meiotically up-regulated gene 24 protein (654 aa).

The RRM 1 domain maps to 299-355 (RNVFIGNLPSSYHEKEIEEAFGKFGKIEHIKILSKKNIAFVHFLNIRDAIKVVRTLS). The tract at residues 383–404 (SCFTSKQNPDTTSDRCRQQESK) is disordered. Polar residues predominate over residues 384–393 (CFTSKQNPDT). A compositionally biased stretch (basic and acidic residues) spans 394–404 (TSDRCRQQESK). RRM domains follow at residues 409–482 (RTVF…WGKE) and 500–571 (RNVY…YAPD).

The protein localises to the cytoplasm. Its function is as follows. Has a role in meiosis. This chain is Meiotically up-regulated gene 24 protein (mug24), found in Schizosaccharomyces pombe (strain 972 / ATCC 24843) (Fission yeast).